We begin with the raw amino-acid sequence, 362 residues long: MDLGSREAFDRTGTLGIEEEFFVVDEYGRPTAGTDELVYENEPPEPLKDRLDHELFKCVIETQTPTIGSLSAADDALAEVRKALVSHAETHGFGIAAAGLHPAAKWRELDHAEKPRYRAQLDRIQYPQHRNTTAGLHIHVGVDDADKAVWVANELRWYMPVMLALSANSPYWNGFDTGLQSARAKIFEALPNTGMPTAFEDFESFQSFERTMVETGSINDRGELWYDVRPHSEHGTVEVRTPDGQADPDHVLAFVEYTQALVEDLSARYEDGESGANHRRELLDENKWRALRHGHDAELLDRSLEESVPLGELVESECQRLGVSGIRDVYEAESGAEKQRRLLESEGMDALCGSLSVEWDSS.

Belongs to the glutamate--cysteine ligase type 2 family. YbdK subfamily.

It carries out the reaction L-cysteine + L-glutamate + ATP = gamma-L-glutamyl-L-cysteine + ADP + phosphate + H(+). Functionally, catalyzes the synthesis of gamma-glutamylcysteine (gamma-GC), the main low-molecular-weight thiol compound instead of glutathione in halophilic archaea. The chain is Glutamate--cysteine ligase from Natronomonas pharaonis (strain ATCC 35678 / DSM 2160 / CIP 103997 / JCM 8858 / NBRC 14720 / NCIMB 2260 / Gabara) (Halobacterium pharaonis).